A 380-amino-acid polypeptide reads, in one-letter code: Probable polyglutamine synthesis accessory protein MT0602 (380 aa).

This sequence belongs to the CapA family.

Functionally, could be involved in the biosynthesis, transport or localization of poly-alpha-L-glutamine (PLG), a cell wall component. Contributes to stress tolerance and virulence. The protein is Probable polyglutamine synthesis accessory protein MT0602 of Mycobacterium tuberculosis (strain CDC 1551 / Oshkosh).